Consider the following 704-residue polypeptide: Glycine--tRNA ligase beta subunit (704 aa).

The protein belongs to the class-II aminoacyl-tRNA synthetase family. In terms of assembly, tetramer of two alpha and two beta subunits.

Its subcellular location is the cytoplasm. The enzyme catalyses tRNA(Gly) + glycine + ATP = glycyl-tRNA(Gly) + AMP + diphosphate. The protein is Glycine--tRNA ligase beta subunit of Rhizobium johnstonii (strain DSM 114642 / LMG 32736 / 3841) (Rhizobium leguminosarum bv. viciae).